The chain runs to 39 residues: Photosystem II reaction center protein L (39 aa).

A helical membrane pass occupies residues 18–38 (SLYLGLLSVLVLGILFSSYFF).

The protein belongs to the PsbL family. In terms of assembly, PSII is composed of 1 copy each of membrane proteins PsbA, PsbB, PsbC, PsbD, PsbE, PsbF, PsbH, PsbI, PsbJ, PsbK, PsbL, PsbM, PsbT, PsbX, PsbY, Psb30/Ycf12, peripheral proteins PsbO, CyanoQ (PsbQ), PsbU, PsbV and a large number of cofactors. It forms dimeric complexes.

Its subcellular location is the cellular thylakoid membrane. Functionally, one of the components of the core complex of photosystem II (PSII). PSII is a light-driven water:plastoquinone oxidoreductase that uses light energy to abstract electrons from H(2)O, generating O(2) and a proton gradient subsequently used for ATP formation. It consists of a core antenna complex that captures photons, and an electron transfer chain that converts photonic excitation into a charge separation. This subunit is found at the monomer-monomer interface and is required for correct PSII assembly and/or dimerization. The chain is Photosystem II reaction center protein L from Prochlorococcus marinus subsp. pastoris (strain CCMP1986 / NIES-2087 / MED4).